The following is a 609-amino-acid chain: MSNEFNAQSFLRTVSSSAGVYRMYDVKNDVIYVGKAKDLKKRLTSYFRKNLANVKTQALVSHIHHIDVTLTHSETDALLLENDYIKQYMPKYNVLLRDDKSYPYILLSQHEHPRLAYHRGPQREKGHYFGPYPNGGAVRESLHLMQKLFPIRQCDDLYYKSRSRPCLQYQLSRCSAPCVGKVSNADYDEQVKLASLFLKGKDQQVISALVDKMELAAERQAYEQAARFRDQIMALRKVAEQQEVSNNKGDMDVIGVHYSSGIACFHLLFIREGKIFGSRSYYPSVPAQTDMDEVLRSFILQFYLNADIQRTIPKEVVISHNFEELHELEAAVSEALDKKFSIKTNVRADRASFLRLAVTNATNAVVTRLSHKNTVEQRFVLLEEILELSTPIQRMECFDISHTMGESTVASCVVFNREGPHKGEYRRYNIEGITPGDDYAAMKQAVSRRFDKIEAGGKIPDILFIDGGLGQLRIAQKIVDEKFVHLDKAPQLIGVAKGEGRKPGLETLILGDTETSFSLEGDSPALHLIQHIRDESHRFAITGHRNRRQKTRNTSTLESIPGIGPKRRKALLQHLGGLQEVKGASVAELVKVPGISIEMAQTIHDALRG.

A GIY-YIG domain is found at 16–94 (SSAGVYRMYD…IKQYMPKYNV (79 aa)). The region spanning 203–238 (QQVISALVDKMELAAERQAYEQAARFRDQIMALRKV) is the UVR domain.

It belongs to the UvrC family. As to quaternary structure, interacts with UvrB in an incision complex.

The protein resides in the cytoplasm. Functionally, the UvrABC repair system catalyzes the recognition and processing of DNA lesions. UvrC both incises the 5' and 3' sides of the lesion. The N-terminal half is responsible for the 3' incision and the C-terminal half is responsible for the 5' incision. The protein is UvrABC system protein C of Shewanella baltica (strain OS185).